The following is a 239-amino-acid chain: MSVPVLRVRRLGLVGYAEALGVQGRYVRELKAGGEAGSPGGALLLCEHPAVYTVGVRRGRYPGEEEARLRGLGADFQRTDRGGLITFHGPGQLVCYPVLHLGALRRSLRSYVCGLESAVIRLCRGLGLPGERQPDTGVWVRGNKICAIGVHCARHITSHGLALNCNTDLGWFGHIVPCGIVGKGVTSLTQELGRQVTIDDIIAPFLEAFEEEFQCQLVPEQNPEQNPVQNRPDRDAGPL.

A mitochondrion-targeting transit peptide spans 1-18 (MSVPVLRVRRLGLVGYAE). Residues 37–217 (GSPGGALLLC…AFEEEFQCQL (181 aa)) form the BPL/LPL catalytic domain. Residues 81–88 (RGGLITFH), 147–149 (AIG), and 160–162 (GLA) contribute to the substrate site. Catalysis depends on cysteine 178, which acts as the Acyl-thioester intermediate. Residues 220 to 239 (EQNPEQNPVQNRPDRDAGPL) are disordered.

This sequence belongs to the LipB family.

It localises to the mitochondrion. It catalyses the reaction octanoyl-[ACP] + L-lysyl-[protein] = N(6)-octanoyl-L-lysyl-[protein] + holo-[ACP] + H(+). The protein operates within protein modification; protein lipoylation via endogenous pathway; protein N(6)-(lipoyl)lysine from octanoyl-[acyl-carrier-protein]: step 1/2. Functionally, catalyzes the transfer of endogenously produced octanoic acid from octanoyl-acyl-carrier-protein (octanoyl-ACP) onto the lipoyl domains of lipoate-dependent enzymes such as the protein H of the glycine cleavage system (GCSH). Lipoyl-ACP can also act as a substrate although octanoyl-ACP is likely to be the physiological substrate. In Xenopus tropicalis (Western clawed frog), this protein is Octanoyl-[acyl-carrier-protein]:protein N-octanoyltransferase LIPT2, mitochondrial (lipt2).